Here is a 266-residue protein sequence, read N- to C-terminus: Cell division protein FtsQ (266 aa).

Over 1 to 31 the chain is Cytoplasmic; sequence MRQKTSSNKKKQKNTNNISLRRKLGLMYKKA. Residues 32–52 traverse the membrane as a helical segment; sequence ILGLKIVLMIFVCLFVFTKYF. Topologically, residues 53–266 are periplasmic; the sequence is TSIKTYLITN…DRNKYYIQKY (214 aa). Positions 72-140 constitute a POTRA domain; it reads FRLENVIIEG…NTVYIKLFER (69 aa).

It belongs to the FtsQ/DivIB family. FtsQ subfamily.

The protein localises to the cell inner membrane. Functionally, essential cell division protein. The sequence is that of Cell division protein FtsQ from Rickettsia typhi (strain ATCC VR-144 / Wilmington).